Here is a 326-residue protein sequence, read N- to C-terminus: uncharacterized protein (326 aa).

Solcar repeat units follow at residues E15 to V106, E114 to F215, and L234 to L322. The next 6 membrane-spanning stretches (helical) occupy residues F16–A36, T83–V103, F120–I140, F191–L211, L240–C260, and F294–F314.

This sequence belongs to the mitochondrial carrier (TC 2.A.29) family.

It localises to the mitochondrion inner membrane. This is an uncharacterized protein from Schizosaccharomyces pombe (strain 972 / ATCC 24843) (Fission yeast).